A 252-amino-acid chain; its full sequence is Serine/threonine phosphatase stp (252 aa).

The interval 1–22 (MHAEFRTDRGRIRHHNEDNGGV) is disordered. The PPM-type phosphatase domain maps to 2-242 (HAEFRTDRGR…DNITVLLVER (241 aa)). Residues Asp36, Gly37, Asp194, and Asp233 each contribute to the Mn(2+) site.

This sequence belongs to the PP2C family. Requires Mn(2+) as cofactor.

Its subcellular location is the cytoplasm. It localises to the membrane. The catalysed reaction is O-phospho-L-seryl-[protein] + H2O = L-seryl-[protein] + phosphate. It catalyses the reaction O-phospho-L-threonyl-[protein] + H2O = L-threonyl-[protein] + phosphate. Its function is as follows. Protein phosphatase that dephosphorylates EF-Tu. This is Serine/threonine phosphatase stp (stp) from Listeria innocua serovar 6a (strain ATCC BAA-680 / CLIP 11262).